Here is a 404-residue protein sequence, read N- to C-terminus: L-cysteine:1D-myo-inositol 2-amino-2-deoxy-alpha-D-glucopyranoside ligase (404 aa).

Cysteine 32 lines the Zn(2+) pocket. L-cysteinyl-5'-AMP-binding positions include 32-35, threonine 47, and 70-72; these read CGIT and NIT. The 'HIGH' region motif lies at 34–44; it reads ITPYDSTHLGH. A 'ERGGDP' region motif is present at residues 176-181; sequence ERGGDP. Tryptophan 216 is a binding site for L-cysteinyl-5'-AMP. Cysteine 220 provides a ligand contact to Zn(2+). 238 to 240 contacts L-cysteinyl-5'-AMP; the sequence is GSD. Residue histidine 245 participates in Zn(2+) binding. Isoleucine 272 lines the L-cysteinyl-5'-AMP pocket. Residues 278–282 carry the 'KMSKS' region motif; it reads KMSKS.

The protein belongs to the class-I aminoacyl-tRNA synthetase family. MshC subfamily. In terms of assembly, monomer. Zn(2+) serves as cofactor.

It carries out the reaction 1D-myo-inositol 2-amino-2-deoxy-alpha-D-glucopyranoside + L-cysteine + ATP = 1D-myo-inositol 2-(L-cysteinylamino)-2-deoxy-alpha-D-glucopyranoside + AMP + diphosphate + H(+). Catalyzes the ATP-dependent condensation of GlcN-Ins and L-cysteine to form L-Cys-GlcN-Ins. This chain is L-cysteine:1D-myo-inositol 2-amino-2-deoxy-alpha-D-glucopyranoside ligase (mshC), found in Corynebacterium glutamicum (strain ATCC 13032 / DSM 20300 / JCM 1318 / BCRC 11384 / CCUG 27702 / LMG 3730 / NBRC 12168 / NCIMB 10025 / NRRL B-2784 / 534).